Reading from the N-terminus, the 542-residue chain is NAD-dependent deacetylase sir2D (542 aa).

Disordered stretches follow at residues 1–37 (MNKR…NTPL) and 136–160 (ETST…TTTT). The segment covering 8 to 25 (NNELNEIQNNQNKNNNNK) has biased composition (low complexity). A coiled-coil region spans residues 165-193 (NETILLDILNNNKDEVDDEIQRIGNNVGN). A Deacetylase sirtuin-type domain is found at 283–542 (ATLDLSTFEK…VQDLLNKVKW (260 aa)). Residue H411 is the Proton acceptor of the active site. C419, C422, C443, and C446 together coordinate Zn(2+).

Belongs to the sirtuin family. Zn(2+) serves as cofactor.

The enzyme catalyses N(6)-acetyl-L-lysyl-[protein] + NAD(+) + H2O = 2''-O-acetyl-ADP-D-ribose + nicotinamide + L-lysyl-[protein]. Functionally, NAD-dependent deacetylase, which plays an important role in the regulation of transcriptional repression. The sequence is that of NAD-dependent deacetylase sir2D (sir2D) from Dictyostelium discoideum (Social amoeba).